A 384-amino-acid chain; its full sequence is 23S rRNA (uracil(747)-C(5))-methyltransferase RlmC (384 aa).

Residues Cys7, Cys15, Cys18, and Cys94 each coordinate [4Fe-4S] cluster. Gln219, Phe248, Glu269, and Asn316 together coordinate S-adenosyl-L-methionine. Cys343 functions as the Nucleophile in the catalytic mechanism.

Belongs to the class I-like SAM-binding methyltransferase superfamily. RNA M5U methyltransferase family. RlmC subfamily.

The enzyme catalyses uridine(747) in 23S rRNA + S-adenosyl-L-methionine = 5-methyluridine(747) in 23S rRNA + S-adenosyl-L-homocysteine + H(+). Catalyzes the formation of 5-methyl-uridine at position 747 (m5U747) in 23S rRNA. The sequence is that of 23S rRNA (uracil(747)-C(5))-methyltransferase RlmC from Shewanella sp. (strain MR-4).